The sequence spans 167 residues: Beta-3 adrenergic receptor (167 aa).

The Extracellular portion of the chain corresponds to 1-25 (RVGADAEAQECHSNPRCCSFASNMP). Residues cysteine 11 and cysteine 17 are joined by a disulfide bond. The helical transmembrane segment at 26-47 (YALLSSSVSFYLPLLVMLFVYA) threads the bilayer. Residues 48–114 (RVFVVAKRQR…LPLREHRALR (67 aa)) lie on the Cytoplasmic side of the membrane. Positions 66-97 (RFPPEESPRSPSRSPSPVAGGTGEAPDGVPSC) are disordered. Residues 115-136 (TLGLIMGIFSLCWLPFFLANVL) traverse the membrane as a helical segment. The Extracellular portion of the chain corresponds to 137 to 148 (RALAGPSIVPNG). The helical transmembrane segment at 149–167 (VFIALNWLGYANSAFNPLI) threads the bilayer.

It belongs to the G-protein coupled receptor 1 family. Adrenergic receptor subfamily. ADRB3 sub-subfamily. As to quaternary structure, interacts with ARRDC3.

The protein localises to the cell membrane. Beta-adrenergic receptors mediate the catecholamine-induced activation of adenylate cyclase through the action of G proteins. Beta-3 is involved in the regulation of lipolysis and thermogenesis. In Meriones unguiculatus (Mongolian jird), this protein is Beta-3 adrenergic receptor (ADRB3).